The chain runs to 183 residues: ATP synthase subunit b, chloroplastic (183 aa).

The chain crosses the membrane as a helical span at residues 27–49 (LATNPINLSVVLGVLIFFGKGVL).

This sequence belongs to the ATPase B chain family. F-type ATPases have 2 components, F(1) - the catalytic core - and F(0) - the membrane proton channel. F(1) has five subunits: alpha(3), beta(3), gamma(1), delta(1), epsilon(1). F(0) has four main subunits: a(1), b(1), b'(1) and c(10-14). The alpha and beta chains form an alternating ring which encloses part of the gamma chain. F(1) is attached to F(0) by a central stalk formed by the gamma and epsilon chains, while a peripheral stalk is formed by the delta, b and b' chains.

The protein localises to the plastid. Its subcellular location is the chloroplast thylakoid membrane. Its function is as follows. F(1)F(0) ATP synthase produces ATP from ADP in the presence of a proton or sodium gradient. F-type ATPases consist of two structural domains, F(1) containing the extramembraneous catalytic core and F(0) containing the membrane proton channel, linked together by a central stalk and a peripheral stalk. During catalysis, ATP synthesis in the catalytic domain of F(1) is coupled via a rotary mechanism of the central stalk subunits to proton translocation. Functionally, component of the F(0) channel, it forms part of the peripheral stalk, linking F(1) to F(0). In Ranunculus macranthus (Large buttercup), this protein is ATP synthase subunit b, chloroplastic.